We begin with the raw amino-acid sequence, 603 residues long: Glutathione-regulated potassium-efflux system protein KefB (603 aa).

13 helical membrane passes run 5–25, 29–49, 55–75, 87–107, 115–135, 152–172, 180–202, 207–227, 230–250, 268–288, 291–311, 326–346, and 356–376; these read ALLT…PIAA, IGAV…GLGF, AILH…GLEL, IFGV…GALY, SALI…LQLM, VLLF…ILAG, WERI…YLVR, FIAA…LVLG, LFME…GILL, GLLL…GILY, IVKI…VLYF, FAGV…AAAS, and PLLL…MQLI. An RCK N-terminal domain is found at 400–521; the sequence is EPQVIVVGFG…VRHFSRETFS (122 aa).

Belongs to the monovalent cation:proton antiporter 2 (CPA2) transporter (TC 2.A.37) family. KefB subfamily. Interacts with the regulatory subunit KefG.

The protein resides in the cell inner membrane. In terms of biological role, pore-forming subunit of a potassium efflux system that confers protection against electrophiles. Catalyzes K(+)/H(+) antiport. In Pectobacterium carotovorum subsp. carotovorum (strain PC1), this protein is Glutathione-regulated potassium-efflux system protein KefB.